The primary structure comprises 129 residues: Large ribosomal subunit protein bL17 (129 aa).

This sequence belongs to the bacterial ribosomal protein bL17 family. Part of the 50S ribosomal subunit. Contacts protein L32.

In Yersinia pseudotuberculosis serotype O:1b (strain IP 31758), this protein is Large ribosomal subunit protein bL17.